The sequence spans 513 residues: V-type proton ATPase subunit B, kidney isoform (513 aa).

Residue R394 coordinates ATP. Positions 510-513 (DTAL) match the PDZ-binding motif.

It belongs to the ATPase alpha/beta chains family. In terms of assembly, V-ATPase is a heteromultimeric enzyme made up of two complexes: the ATP-hydrolytic V1 complex and the proton translocation V0 complex. The V1 complex consists of three catalytic AB heterodimers that form a heterohexamer, three peripheral stalks each consisting of EG heterodimers, one central rotor including subunits D and F, and the regulatory subunits C and H. The proton translocation complex V0 consists of the proton transport subunit a, a ring of proteolipid subunits c9c'', rotary subunit d, subunits e and f, and the accessory subunits ATP6AP1/Ac45 and ATP6AP2/PRR. Forms a complex with NHERF1 and SCL4A7. As to expression, kidney; localizes to early distal nephron, encompassing thick ascending limbs and distal convoluted tubules (at protein level). Expressed in the cochlea and endolymphatic sac.

Its subcellular location is the apical cell membrane. The protein resides in the basolateral cell membrane. In terms of biological role, non-catalytic subunit of the V1 complex of vacuolar(H+)-ATPase (V-ATPase), a multisubunit enzyme composed of a peripheral complex (V1) that hydrolyzes ATP and a membrane integral complex (V0) that translocates protons. V-ATPase is responsible for acidifying and maintaining the pH of intracellular compartments and in some cell types, is targeted to the plasma membrane, where it is responsible for acidifying the extracellular environment. Essential for the proper assembly and activity of V-ATPase. In renal intercalated cells, mediates secretion of protons (H+) into the urine thereby ensuring correct urinary acidification. Required for optimal olfactory function by mediating the acidification of the nasal olfactory epithelium. This is V-type proton ATPase subunit B, kidney isoform (ATP6V1B1) from Homo sapiens (Human).